The primary structure comprises 128 residues: Serum amyloid A-4 protein (128 aa).

An N-terminal signal peptide occupies residues 1 to 18; that stretch reads MKLFIGLIFCSLVMGVSS. The interval 93 to 128 is disordered; it reads SSEREEDQVSNRRAEEWGRSGQDPDHFRPAGLPKKY. Positions 99 to 120 are enriched in basic and acidic residues; the sequence is DQVSNRRAEEWGRSGQDPDHFR.

It belongs to the SAA family. As to quaternary structure, apolipoprotein of the HDL complex.

The protein resides in the secreted. Its function is as follows. Major acute phase reactant. In Sus scrofa (Pig), this protein is Serum amyloid A-4 protein.